The following is a 322-amino-acid chain: Dioxygenase himG (322 aa).

The Fe cation site is built by histidine 148 and histidine 229.

The protein belongs to the PhyH family. Homodimer. Fe cation is required as a cofactor.

The protein operates within secondary metabolite biosynthesis. Polyketide synthase-nonribosomal peptide synthetase; part of the him gene cluster that mediates the biosynthesis of himeic acid A, a ubiquitin-activating enzyme (E1) inhibitor. First, himA, together with the trans-enoyl reductase himH, catalyzes the formation of apolyketide chain, which is then condensed with leucine by the NRPS activity of himA. Dieckmann cyclization and release from himA gives a tetramic acid intermediate as the product of himA PKS-NRPS. HimG then catalyzes alpha-oxidation of the tetramic acid ring, with a subsequent rearrangement to yield apyrone intermediate. Two terminal methyl groups of polyketide and amide side chains are oxidized to carboxylic acids by himC cytochrome P450 monooxygenase to form himeic acid A. Himeic acid A is further converted to himeic acid B and C during culture growth. No gene responsible for pyrone to pyridone conversion was found in the him gene cluster and himeic acid A is non-enzymatically converted to himeic acid C by the incorporation of an ammonium nitrogen atom in a pH5 buffer, and to himeic acid B at a conversion ratio of 50% during incubation in MeOH for 5 days. The polypeptide is Dioxygenase himG (Aspergillus japonicus).